Consider the following 549-residue polypeptide: SH3 domain-containing protein 21 (549 aa).

Positions 1–56 (MVQSELQLQPRAGRRADASNWGDFGSDKGGLGNTDIPPITPNSQRPPKLSNLTYDS) are disordered. The span at 41-54 (PNSQRPPKLSNLTY) shows a compositional bias: polar residues. The region spanning 65 to 126 (SCPETCRVLF…PDNFVIPPPP (62 aa)) is the SH3 domain. 2 disordered regions span residues 142–303 (PIKE…KPAK) and 332–479 (FKKE…KSKN). The segment covering 211 to 220 (QASQQHSASS) has biased composition (low complexity). 2 stretches are compositionally biased toward basic and acidic residues: residues 267–280 (PVPKKAPDSDKIPA) and 332–342 (FKKEPSRDNDQ). Polar residues-rich tracts occupy residues 343–365 (CQHLPQGGSTQRPESPAPSNNIQ) and 439–456 (VLPQESAPTPQVPHTIQQ). Positions 482-510 (MDVLESLKEEVGLLRSRLELLELKLEQKM) form a coiled coil. A disordered region spans residues 528–549 (QMMQRNRKSFKHAETQTETQTE).

The sequence is that of SH3 domain-containing protein 21 (Sh3d21) from Mus musculus (Mouse).